Consider the following 453-residue polypeptide: Calcium-binding tyrosine phosphorylation-regulated protein (453 aa).

The region spanning 12-49 (YGLKTLLEGVSRAILKTNPTNITQFAAVYFKELIVFRE) is the RIIa domain. 3 disordered regions span residues 86 to 165 (PIKP…PVSA), 246 to 278 (PVSE…QVTS), and 406 to 453 (IINP…PEQV). A compositionally biased stretch (low complexity) spans 143-154 (DKPTTPKTDYTP).

As to quaternary structure, interacts with FSCB. Post-translationally, phosphorylated on tyrosine residues during in vitro capacitation. Dephosphorylation affects its ability to bind calcium. Expressed in spermatozoa.

It is found in the cytoplasm. The protein localises to the cytoskeleton. The protein resides in the cell projection. It localises to the cilium. Its subcellular location is the flagellum. May function as a regulator of both motility- and head-associated functions such as capacitation and the acrosome reaction. May bind calcium in vitro. The protein is Calcium-binding tyrosine phosphorylation-regulated protein (Cabyr) of Mus musculus (Mouse).